We begin with the raw amino-acid sequence, 155 residues long: Interleukin-2 (155 aa).

An N-terminal signal peptide occupies residues 1–20 (MYKIQLLSCIALTLALVANG). Thr23 carries O-linked (GalNAc...) threonine glycosylation. An intrachain disulfide couples Cys79 to Cys127.

Belongs to the IL-2 family.

Its subcellular location is the secreted. Functionally, cytokine produced by activated CD4-positive helper T-cells and to a lesser extend activated CD8-positive T-cells and natural killer (NK) cells that plays pivotal roles in the immune response and tolerance. Binds to a receptor complex composed of either the high-affinity trimeric IL-2R (IL2RA/CD25, IL2RB/CD122 and IL2RG/CD132) or the low-affinity dimeric IL-2R (IL2RB and IL2RG). Interaction with the receptor leads to oligomerization and conformation changes in the IL-2R subunits resulting in downstream signaling starting with phosphorylation of JAK1 and JAK3. In turn, JAK1 and JAK3 phosphorylate the receptor to form a docking site leading to the phosphorylation of several substrates including STAT5. This process leads to activation of several pathways including STAT, phosphoinositide-3-kinase/PI3K and mitogen-activated protein kinase/MAPK pathways. Functions as a T-cell growth factor and can increase NK-cell cytolytic activity as well. Promotes strong proliferation of activated B-cells and subsequently immunoglobulin production. Plays a pivotal role in regulating the adaptive immune system by controlling the survival and proliferation of regulatory T-cells, which are required for the maintenance of immune tolerance. Moreover, participates in the differentiation and homeostasis of effector T-cell subsets, including Th1, Th2, Th17 as well as memory CD8-positive T-cells. The polypeptide is Interleukin-2 (IL2) (Ovis aries (Sheep)).